The following is a 619-amino-acid chain: Pescadillo homolog (619 aa).

Residues 303 to 324 (ADKDQKDQDTIEDAEEVTEPTV) are disordered. Over residues 312–324 (TIEDAEEVTEPTV) the composition is skewed to acidic residues. The BRCT domain maps to 353–452 (PTSQLFSKFI…ELVSVGDYAP (100 aa)). A disordered region spans residues 456–567 (LPPHLSPWGD…STKAALTPEE (112 aa)). Coiled-coil stretches lie at residues 472–560 (NAKA…ASTK) and 588–619 (MQYG…LKDV). The span at 480 to 522 (EAEEEEEEEEEDEEEEEEEEEIEVADGDEDQDDEEEEEIEDED) shows a compositional bias: acidic residues. Over residues 523–539 (LKAQKELEMEVAGKKFS) the composition is skewed to basic and acidic residues.

It belongs to the pescadillo family. As to quaternary structure, component of the NOP7 complex, composed of ERB1, NOP7 and YTM1. The complex is held together by ERB1, which interacts with NOP7 via its N-terminal domain and with YTM1 via a high-affinity interaction between the seven-bladed beta-propeller domains of the 2 proteins. The NOP7 complex associates with the 66S pre-ribosome.

It localises to the nucleus. The protein localises to the nucleolus. The protein resides in the nucleoplasm. Its function is as follows. Component of the NOP7 complex, which is required for maturation of the 25S and 5.8S ribosomal RNAs and formation of the 60S ribosome. In Lodderomyces elongisporus (strain ATCC 11503 / CBS 2605 / JCM 1781 / NBRC 1676 / NRRL YB-4239) (Yeast), this protein is Pescadillo homolog.